We begin with the raw amino-acid sequence, 309 residues long: Methionyl-tRNA formyltransferase (309 aa).

109-112 contacts (6S)-5,6,7,8-tetrahydrofolate; sequence SLLP.

This sequence belongs to the Fmt family.

The enzyme catalyses L-methionyl-tRNA(fMet) + (6R)-10-formyltetrahydrofolate = N-formyl-L-methionyl-tRNA(fMet) + (6S)-5,6,7,8-tetrahydrofolate + H(+). Its function is as follows. Attaches a formyl group to the free amino group of methionyl-tRNA(fMet). The formyl group appears to play a dual role in the initiator identity of N-formylmethionyl-tRNA by promoting its recognition by IF2 and preventing the misappropriation of this tRNA by the elongation apparatus. The polypeptide is Methionyl-tRNA formyltransferase (Clostridium novyi (strain NT)).